The sequence spans 171 residues: ATP synthase subunit b (171 aa).

A helical membrane pass occupies residues 2 to 22 (VLVKMALGFLILLSPLCAMEL).

The protein belongs to the ATPase B chain family. F-type ATPases have 2 components, F(1) - the catalytic core - and F(0) - the membrane proton channel. F(1) has five subunits: alpha(3), beta(3), gamma(1), delta(1), epsilon(1). F(0) has three main subunits: a(1), b(2) and c(10-14). The alpha and beta chains form an alternating ring which encloses part of the gamma chain. F(1) is attached to F(0) by a central stalk formed by the gamma and epsilon chains, while a peripheral stalk is formed by the delta and b chains.

It localises to the cell inner membrane. F(1)F(0) ATP synthase produces ATP from ADP in the presence of a proton or sodium gradient. F-type ATPases consist of two structural domains, F(1) containing the extramembraneous catalytic core and F(0) containing the membrane proton channel, linked together by a central stalk and a peripheral stalk. During catalysis, ATP synthesis in the catalytic domain of F(1) is coupled via a rotary mechanism of the central stalk subunits to proton translocation. In terms of biological role, component of the F(0) channel, it forms part of the peripheral stalk, linking F(1) to F(0). The protein is ATP synthase subunit b of Helicobacter acinonychis (strain Sheeba).